The sequence spans 1024 residues: Error-prone DNA polymerase (1024 aa).

It belongs to the DNA polymerase type-C family. DnaE2 subfamily.

Its subcellular location is the cytoplasm. It catalyses the reaction DNA(n) + a 2'-deoxyribonucleoside 5'-triphosphate = DNA(n+1) + diphosphate. Its function is as follows. DNA polymerase involved in damage-induced mutagenesis and translesion synthesis (TLS). It is not the major replicative DNA polymerase. The polypeptide is Error-prone DNA polymerase (Pseudomonas paraeruginosa (strain DSM 24068 / PA7) (Pseudomonas aeruginosa (strain PA7))).